The chain runs to 235 residues: Large ribosomal subunit protein uL1 (235 aa).

This sequence belongs to the universal ribosomal protein uL1 family. In terms of assembly, part of the 50S ribosomal subunit.

In terms of biological role, binds directly to 23S rRNA. The L1 stalk is quite mobile in the ribosome, and is involved in E site tRNA release. Protein L1 is also a translational repressor protein, it controls the translation of the L11 operon by binding to its mRNA. This chain is Large ribosomal subunit protein uL1, found in Methylobacterium sp. (strain 4-46).